The sequence spans 450 residues: MGAPPGYRPSAWVHLLHQLPRADFQLRPVPSGFAPQEQEYQQALLLVAALAGLGLGLSLIFIAVYLIRFCCCRPPEPPGSKTPSPGGGCVTWSCIVALLAGCIGIGIGFYGNSETSDGVSQLSSALLHANHTLSAIDHLVLETVERLGEAVRTELTTLEEVLEPRTELVAAARGARRQAEAVAQQLQGLAFWQGVPLSPLQVAEDVSFVEEYRWLAYVLLLLLELLVCLFTLLGLAKQSKWLVIVMTVMSLLVLVLSWGSMGLEAATAVGLSDFYSNPDPYVLNLTQEETGLSSDILSYYFLCNQAVSNPFQQRLTLSQRALANIHSQLLGLEREAVPQFPSAQKPLLSLEETLNVTEGNFHQLVALLHCRGLHKDYGAALRGLCEDALEGLLFLLLFSLLSAGALATALCSLPRAWALFPPSDDYDDTDDDDPFNPQESKRFVQWQSSI.

The Extracellular portion of the chain corresponds to 1 to 43 (MGAPPGYRPSAWVHLLHQLPRADFQLRPVPSGFAPQEQEYQQA). Residues 44 to 64 (LLLVAALAGLGLGLSLIFIAV) form a helical membrane-spanning segment. Topologically, residues 65–88 (YLIRFCCCRPPEPPGSKTPSPGGG) are cytoplasmic. The chain crosses the membrane as a helical span at residues 89 to 109 (CVTWSCIVALLAGCIGIGIGF). Over 110 to 214 (YGNSETSDGV…DVSFVEEYRW (105 aa)) the chain is Extracellular. Residue Asn130 is glycosylated (N-linked (GlcNAc...) asparagine). The helical transmembrane segment at 215 to 235 (LAYVLLLLLELLVCLFTLLGL) threads the bilayer. Residues 236-240 (AKQSK) lie on the Cytoplasmic side of the membrane. The helical transmembrane segment at 241–261 (WLVIVMTVMSLLVLVLSWGSM) threads the bilayer. Topologically, residues 262-390 (GLEAATAVGL…LRGLCEDALE (129 aa)) are extracellular. Asn284 and Asn355 each carry an N-linked (GlcNAc...) asparagine glycan. Cys303 and Cys370 are joined by a disulfide. A helical membrane pass occupies residues 391–411 (GLLFLLLFSLLSAGALATALC). Residues 412-450 (SLPRAWALFPPSDDYDDTDDDDPFNPQESKRFVQWQSSI) are Cytoplasmic-facing. The segment at 428 to 450 (DTDDDDPFNPQESKRFVQWQSSI) is disordered. Phosphoserine is present on Ser440.

This sequence belongs to the tweety family. Homotetramer; disulfide-linked. Homodimer. N-glycosylated. Contains high-mannose, hybrid and complex oligosaccharides.

It is found in the cell membrane. The catalysed reaction is chloride(in) = chloride(out). The enzyme catalyses L-glutamate(out) = L-glutamate(in). Functionally, calcium-independent, swelling-dependent volume-regulated anion channel (VRAC-swell) which plays a pivotal role in the process of regulatory volume decrease (RVD) in the brain through the efflux of anions like chloride and organic osmolytes like glutamate. In Macaca fascicularis (Crab-eating macaque), this protein is Protein tweety homolog 1 (TTYH1).